Consider the following 320-residue polypeptide: GTPase Era (320 aa).

The region spanning 25–193 is the Era-type G domain; the sequence is HCGFIAIVGR…RKHVRNHLPK (169 aa). Positions 33–40 are G1; that stretch reads GRPNVGKS. Residue 33–40 coordinates GTP; sequence GRPNVGKS. A G2 region spans residues 59-63; that stretch reads QTTRH. The interval 80–83 is G3; sequence DTPG. Residues 80–84 and 142–145 contribute to the GTP site; these read DTPGL and NKVD. Positions 142–145 are G4; it reads NKVD. The interval 172–174 is G5; the sequence is ISA. Residues 216–302 form the KH type-2 domain; sequence VREKLMRFTG…YLETWVKVKS (87 aa).

Belongs to the TRAFAC class TrmE-Era-EngA-EngB-Septin-like GTPase superfamily. Era GTPase family. As to quaternary structure, monomer.

It is found in the cytoplasm. The protein resides in the cell inner membrane. Functionally, an essential GTPase that binds both GDP and GTP, with rapid nucleotide exchange. Plays a role in 16S rRNA processing and 30S ribosomal subunit biogenesis and possibly also in cell cycle regulation and energy metabolism. In Vibrio parahaemolyticus serotype O3:K6 (strain RIMD 2210633), this protein is GTPase Era.